The chain runs to 594 residues: DNA ligase 2 (594 aa).

Position 250 (E250) interacts with ATP. Catalysis depends on K252, which acts as the N6-AMP-lysine intermediate. Residues R257, R273, E303, F343, R419, and K425 each contribute to the ATP site.

It belongs to the ATP-dependent DNA ligase family. The cofactor is Mg(2+).

The catalysed reaction is ATP + (deoxyribonucleotide)n-3'-hydroxyl + 5'-phospho-(deoxyribonucleotide)m = (deoxyribonucleotide)n+m + AMP + diphosphate.. DNA ligase that seals nicks in double-stranded DNA during DNA replication, DNA recombination and DNA repair. This chain is DNA ligase 2, found in Korarchaeum cryptofilum (strain OPF8).